A 64-amino-acid polypeptide reads, in one-letter code: Conotoxin Ts-011 (64 aa).

The first 22 residues, 1 to 22 (MHCLPVLVILLLLIASTPSVDA), serve as a signal peptide directing secretion. Residues 23-51 (RPKTKDDVPLASFHGADNANRILRTLWNL) constitute a propeptide that is removed on maturation. Residue I63 is modified to Isoleucine amide.

It belongs to the conotoxin T superfamily. Post-translationally, contains 2 disulfide bonds that can be either 'C1-C3, C2-C4' or 'C1-C4, C2-C3', since these disulfide connectivities have been observed for conotoxins with cysteine framework V (for examples, see AC P0DQQ7 and AC P81755). In terms of tissue distribution, expressed by the venom duct.

It is found in the secreted. The polypeptide is Conotoxin Ts-011 (Conus tessulatus (Tessellate cone)).